Consider the following 75-residue polypeptide: Conotoxin Vn5.5 (75 aa).

The first 19 residues, 1–19 (MLCLPVFIILLLLASPAAP), serve as a signal peptide directing secretion. A propeptide spanning residues 20 to 59 (NPLEKRIQSDLIRAALEDADMKTDEREIVNIIDSISDVAK) is cleaved from the precursor. At glutamine 60 the chain carries Pyrrolidone carboxylic acid.

It belongs to the conotoxin T superfamily. In terms of processing, contains 2 disulfide bonds that can be either 'C1-C3, C2-C4' or 'C1-C4, C2-C3', since these disulfide connectivities have been observed for conotoxins with cysteine framework V (for examples, see AC P0DQQ7 and AC P81755). As to expression, expressed by the venom duct.

It localises to the secreted. The chain is Conotoxin Vn5.5 from Conus ventricosus (Mediterranean cone).